A 104-amino-acid chain; its full sequence is Transcription initiation factor IIA subunit 2 (104 aa).

Belongs to the TFIIA subunit 2 family. In terms of assembly, TFIIA is a heterodimer of the large unprocessed subunit 1 and a small subunit gamma.

The protein resides in the nucleus. In terms of biological role, TFIIA is a component of the transcription machinery of RNA polymerase II and plays an important role in transcriptional activation. TFIIA in a complex with TBP mediates transcriptional activity. The sequence is that of Transcription initiation factor IIA subunit 2 from Schistosoma mansoni (Blood fluke).